Reading from the N-terminus, the 343-residue chain is Anthranilate phosphoribosyltransferase (343 aa).

5-phospho-alpha-D-ribose 1-diphosphate contacts are provided by residues Gly-84, 87–88, Thr-92, 94–97, 112–120, and Ser-124; these read GD, NIST, and KHGNRGVSS. Gly-84 provides a ligand contact to anthranilate. Ser-96 provides a ligand contact to Mg(2+). Asn-115 provides a ligand contact to anthranilate. Arg-170 contributes to the anthranilate binding site. Mg(2+) contacts are provided by Asp-229 and Glu-230.

Belongs to the anthranilate phosphoribosyltransferase family. In terms of assembly, homodimer. Requires Mg(2+) as cofactor.

The enzyme catalyses N-(5-phospho-beta-D-ribosyl)anthranilate + diphosphate = 5-phospho-alpha-D-ribose 1-diphosphate + anthranilate. Its pathway is amino-acid biosynthesis; L-tryptophan biosynthesis; L-tryptophan from chorismate: step 2/5. Catalyzes the transfer of the phosphoribosyl group of 5-phosphorylribose-1-pyrophosphate (PRPP) to anthranilate to yield N-(5'-phosphoribosyl)-anthranilate (PRA). This chain is Anthranilate phosphoribosyltransferase, found in Burkholderia vietnamiensis (strain G4 / LMG 22486) (Burkholderia cepacia (strain R1808)).